Reading from the N-terminus, the 248-residue chain is 3-deoxy-manno-octulosonate cytidylyltransferase (248 aa).

The protein belongs to the KdsB family.

The protein localises to the cytoplasm. It carries out the reaction 3-deoxy-alpha-D-manno-oct-2-ulosonate + CTP = CMP-3-deoxy-beta-D-manno-octulosonate + diphosphate. The protein operates within nucleotide-sugar biosynthesis; CMP-3-deoxy-D-manno-octulosonate biosynthesis; CMP-3-deoxy-D-manno-octulosonate from 3-deoxy-D-manno-octulosonate and CTP: step 1/1. Its pathway is bacterial outer membrane biogenesis; lipopolysaccharide biosynthesis. In terms of biological role, activates KDO (a required 8-carbon sugar) for incorporation into bacterial lipopolysaccharide in Gram-negative bacteria. The polypeptide is 3-deoxy-manno-octulosonate cytidylyltransferase (Escherichia coli O6:H1 (strain CFT073 / ATCC 700928 / UPEC)).